The sequence spans 176 residues: MSQALQQIFNQANTTNFVVSIPHSNTTSAFTLNAQSVPIPGIRIPVTDTVTGPFGLGRAQRPGVTFEYDPLIVRFIVDEELKSWIGMYEWMLGTSNYLTGENTAQKTGPEYITLYILDNSKTEIVMSINFYKPWVSDLSEVEFSYTEDSDPALVCTATIPYTYFQVEKDGKIIAEV.

In terms of assembly, homohexamer. Interacts with completion protein gp15.

It localises to the virion. Functionally, plays an essential role in tail assembly by capping the rapidly polymerizing tail once it has reached its requisite length and serving as the interaction surface for the completion protein. The sequence is that of Tail tube terminator protein (3) from Escherichia coli (Bacteriophage T4).